Reading from the N-terminus, the 256-residue chain is Zinc import ATP-binding protein ZnuC 1 (256 aa).

Positions 5–220 (LTLQDVCVVF…PKYIALFGQQ (216 aa)) constitute an ABC transporter domain. 37 to 44 (GPNGAGKS) is a binding site for ATP. The tract at residues 232-256 (HHHNHDLSGEPSDGSCCSKNKKAHQ) is disordered.

Belongs to the ABC transporter superfamily. Zinc importer (TC 3.A.1.15.5) family. As to quaternary structure, the complex is composed of two ATP-binding proteins (ZnuC), two transmembrane proteins (ZnuB) and a solute-binding protein (ZnuA).

The protein resides in the cell inner membrane. It catalyses the reaction Zn(2+)(out) + ATP(in) + H2O(in) = Zn(2+)(in) + ADP(in) + phosphate(in) + H(+)(in). Functionally, part of the ABC transporter complex ZnuABC involved in zinc import. Responsible for energy coupling to the transport system. This chain is Zinc import ATP-binding protein ZnuC 1, found in Aliivibrio fischeri (strain ATCC 700601 / ES114) (Vibrio fischeri).